Reading from the N-terminus, the 364-residue chain is Chorismate synthase (364 aa).

Position 47 (arginine 47) interacts with NADP(+). Residues 124 to 126 (RGS), 240 to 241 (NA), glycine 284, 299 to 303 (KPTPS), and arginine 326 contribute to the FMN site.

It belongs to the chorismate synthase family. FMNH2 is required as a cofactor.

It catalyses the reaction 5-O-(1-carboxyvinyl)-3-phosphoshikimate = chorismate + phosphate. It participates in metabolic intermediate biosynthesis; chorismate biosynthesis; chorismate from D-erythrose 4-phosphate and phosphoenolpyruvate: step 7/7. In terms of biological role, catalyzes the anti-1,4-elimination of the C-3 phosphate and the C-6 proR hydrogen from 5-enolpyruvylshikimate-3-phosphate (EPSP) to yield chorismate, which is the branch point compound that serves as the starting substrate for the three terminal pathways of aromatic amino acid biosynthesis. This reaction introduces a second double bond into the aromatic ring system. The chain is Chorismate synthase from Methanobrevibacter smithii (strain ATCC 35061 / DSM 861 / OCM 144 / PS).